Here is a 368-residue protein sequence, read N- to C-terminus: Chaperone protein DnaJ (368 aa).

Residues 5–70 (DYYQVLGVPR…KKRKLYDTHG (66 aa)) form the J domain. The segment at 124–201 (GVERQIQIPT…CNGAGRVEDH (78 aa)) adopts a CR-type zinc-finger fold. 8 residues coordinate Zn(2+): Cys137, Cys140, Cys153, Cys156, Cys175, Cys178, Cys189, and Cys192. CXXCXGXG motif repeat units lie at residues 137–144 (CTHCHGSG), 153–160 (CGTCRGSG), 175–182 (CPHCGGRG), and 189–196 (CKVCNGAG).

It belongs to the DnaJ family. In terms of assembly, homodimer. Requires Zn(2+) as cofactor.

The protein resides in the cytoplasm. Participates actively in the response to hyperosmotic and heat shock by preventing the aggregation of stress-denatured proteins and by disaggregating proteins, also in an autonomous, DnaK-independent fashion. Unfolded proteins bind initially to DnaJ; upon interaction with the DnaJ-bound protein, DnaK hydrolyzes its bound ATP, resulting in the formation of a stable complex. GrpE releases ADP from DnaK; ATP binding to DnaK triggers the release of the substrate protein, thus completing the reaction cycle. Several rounds of ATP-dependent interactions between DnaJ, DnaK and GrpE are required for fully efficient folding. Also involved, together with DnaK and GrpE, in the DNA replication of plasmids through activation of initiation proteins. The polypeptide is Chaperone protein DnaJ (Xylella fastidiosa (strain M23)).